A 162-amino-acid polypeptide reads, in one-letter code: uncharacterized protein (162 aa).

Over residues 65-76 the composition is skewed to basic and acidic residues; it reads EEKPLEVAQDRN. The tract at residues 65–93 is disordered; it reads EEKPLEVAQDRNNKRKAPSHLEPAHDFIS.

This is an uncharacterized protein from Bacillus subtilis (strain 168).